A 690-amino-acid chain; its full sequence is Elongation factor G (690 aa).

The 276-residue stretch at 8-283 folds into the tr-type G domain; sequence SRCRNIGIMA…AVVDFLPSPS (276 aa). Residues 17-24, 81-85, and 135-138 contribute to the GTP site; these read AHIDAGKT, DTPGH, and NKMD.

It belongs to the TRAFAC class translation factor GTPase superfamily. Classic translation factor GTPase family. EF-G/EF-2 subfamily.

The protein localises to the cytoplasm. Functionally, catalyzes the GTP-dependent ribosomal translocation step during translation elongation. During this step, the ribosome changes from the pre-translocational (PRE) to the post-translocational (POST) state as the newly formed A-site-bound peptidyl-tRNA and P-site-bound deacylated tRNA move to the P and E sites, respectively. Catalyzes the coordinated movement of the two tRNA molecules, the mRNA and conformational changes in the ribosome. This Anaplasma marginale (strain St. Maries) protein is Elongation factor G.